Consider the following 555-residue polypeptide: Glutamine--tRNA ligase (555 aa).

Positions 34–44 (PEPNGYLHIGH) match the 'HIGH' region motif. Residues 35-37 (EPN) and 41-47 (HIGHAKS) each bind ATP. 2 residues coordinate L-glutamine: D67 and Y212. ATP is bound by residues T231, 261–262 (RL), and 269–271 (MSK). The short motif at 268–272 (IMSKR) is the 'KMSKS' region element.

Belongs to the class-I aminoacyl-tRNA synthetase family. Monomer.

It is found in the cytoplasm. It catalyses the reaction tRNA(Gln) + L-glutamine + ATP = L-glutaminyl-tRNA(Gln) + AMP + diphosphate. In Yersinia pseudotuberculosis serotype O:1b (strain IP 31758), this protein is Glutamine--tRNA ligase.